We begin with the raw amino-acid sequence, 57 residues long: Andropin (57 aa).

A signal peptide spans 1–23 (MKYFVVLVVLALILAISVGPSDA).

It belongs to the andropin family. Ejaculatory duct of adult males.

Its subcellular location is the secreted. Male-specific peptide with moderate activity against Gram-positive bacteria. The protein is Andropin (Anp) of Drosophila melanogaster (Fruit fly).